The chain runs to 530 residues: Calnexin homolog 1 (530 aa).

The N-terminal stretch at 1-20 (MRQRQLFSVFLLLLAFVSFQ) is a signal peptide. Over 21–466 (KLCYCDDQTV…EKAEQQPNLT (446 aa)) the chain is Lumenal. Residues Ser34 and Asp65 each coordinate Ca(2+). A disulfide bridge links Cys108 with Cys143. Residues Tyr112, Lys114, Tyr134, and Asp141 each contribute to the an alpha-D-glucoside site. A disordered region spans residues 216-315 (ALIPAKTIPD…KCEAAPGCGE (100 aa)). Residues 223-356 (IPDPEDKKPE…RDIPNPDYFE (134 aa)) are p domain (Extended arm). A compositionally biased stretch (basic and acidic residues) spans 224 to 240 (PDPEDKKPEDWDERAKI). Repeat copies occupy residues 225–236 (DPEDKKPEDWDE), 242–253 (DPNAVKPEDWDE), 261–272 (DEEAEKPEGWLD), 280–291 (DPEATKPEDWDD), and 295–305 (GMWEAPKIDNP). 4 X approximate repeats stretches follow at residues 225–291 (DPED…DWDD) and 295–352 (GMWE…IPNP). Residues 250–281 (DWDEDAPMEIEDEEAEKPEGWLDDEPEEVDDP) are compositionally biased toward acidic residues. An intrachain disulfide couples Cys307 to Cys313. 3 tandem repeats follow at residues 314–324 (GEWKRPMKRNP), 328–338 (GKWSSPLIDNP), and 342–352 (GIWKPRDIPNP). Glu371 contacts an alpha-D-glucoside. Position 382 (Asp382) interacts with Ca(2+). Asn464 carries an N-linked (GlcNAc...) asparagine glycan. Residues 467 to 487 (IGVLVAIVVVFFSLFLKLIFG) form a helical membrane-spanning segment. The Cytoplasmic segment spans residues 488-530 (GKKAAAPVEKKKPEVAESSKSGDEAEKKEETAAPRKRQPRRDN). A disordered region spans residues 490-530 (KAAAPVEKKKPEVAESSKSGDEAEKKEETAAPRKRQPRRDN). The segment covering 495–520 (VEKKKPEVAESSKSGDEAEKKEETAA) has biased composition (basic and acidic residues). The residue at position 508 (Ser508) is a Phosphoserine. Positions 521-530 (PRKRQPRRDN) are enriched in basic residues.

This sequence belongs to the calreticulin family.

It localises to the endoplasmic reticulum membrane. Its function is as follows. Calcium-binding protein that interacts with newly synthesized monoglucosylated glycoproteins in the endoplasmic reticulum. It may act in assisting protein assembly and/or in the retention within the ER of unassembled protein subunits. It seems to play a major role in the quality control apparatus of the ER by the retention of incorrectly folded proteins. The chain is Calnexin homolog 1 (CNX1) from Arabidopsis thaliana (Mouse-ear cress).